The chain runs to 293 residues: Kynurenine formamidase (293 aa).

Residues 84–88 (HGGYW) carry the HGGXW motif. Ser-153 acts as the Nucleophile in catalysis. Catalysis depends on residues Asp-236 and His-268.

It belongs to the kynurenine formamidase family. Homodimer.

The protein resides in the cytoplasm. Its subcellular location is the cytosol. It is found in the nucleus. The catalysed reaction is N-formyl-L-kynurenine + H2O = L-kynurenine + formate + H(+). The protein operates within amino-acid degradation; L-tryptophan degradation via kynurenine pathway; L-kynurenine from L-tryptophan: step 2/2. In terms of biological role, catalyzes the hydrolysis of N-formyl-L-kynurenine to L-kynurenine, the second step in the kynurenine pathway of tryptophan degradation. Kynurenine may be further oxidized to nicotinic acid, NAD(H) and NADP(H). Required for elimination of toxic metabolites. The sequence is that of Kynurenine formamidase (afmid) from Danio rerio (Zebrafish).